A 404-amino-acid polypeptide reads, in one-letter code: Cysteine desulfurase IscS (404 aa).

Residues 75–76 (AT), Asn-155, Gln-183, and 203–205 (SAH) contribute to the pyridoxal 5'-phosphate site. An N6-(pyridoxal phosphate)lysine modification is found at Lys-206. Thr-243 lines the pyridoxal 5'-phosphate pocket. The active-site Cysteine persulfide intermediate is Cys-328. Position 328 (Cys-328) interacts with [2Fe-2S] cluster.

It belongs to the class-V pyridoxal-phosphate-dependent aminotransferase family. NifS/IscS subfamily. In terms of assembly, homodimer. Forms a heterotetramer with IscU, interacts with other sulfur acceptors. Requires pyridoxal 5'-phosphate as cofactor.

The protein localises to the cytoplasm. The catalysed reaction is (sulfur carrier)-H + L-cysteine = (sulfur carrier)-SH + L-alanine. Its pathway is cofactor biosynthesis; iron-sulfur cluster biosynthesis. Master enzyme that delivers sulfur to a number of partners involved in Fe-S cluster assembly, tRNA modification or cofactor biosynthesis. Catalyzes the removal of elemental sulfur atoms from cysteine to produce alanine. Functions as a sulfur delivery protein for Fe-S cluster synthesis onto IscU, an Fe-S scaffold assembly protein, as well as other S acceptor proteins. The polypeptide is Cysteine desulfurase IscS (Pseudomonas fluorescens (strain Pf0-1)).